The sequence spans 417 residues: Serine hydroxymethyltransferase (417 aa).

Residues leucine 121 and 125–127 (GHL) contribute to the (6S)-5,6,7,8-tetrahydrofolate site. Lysine 230 carries the post-translational modification N6-(pyridoxal phosphate)lysine. Residue 355-357 (SPF) coordinates (6S)-5,6,7,8-tetrahydrofolate.

It belongs to the SHMT family. In terms of assembly, homodimer. It depends on pyridoxal 5'-phosphate as a cofactor.

The protein resides in the cytoplasm. The enzyme catalyses (6R)-5,10-methylene-5,6,7,8-tetrahydrofolate + glycine + H2O = (6S)-5,6,7,8-tetrahydrofolate + L-serine. It functions in the pathway one-carbon metabolism; tetrahydrofolate interconversion. The protein operates within amino-acid biosynthesis; glycine biosynthesis; glycine from L-serine: step 1/1. Its function is as follows. Catalyzes the reversible interconversion of serine and glycine with tetrahydrofolate (THF) serving as the one-carbon carrier. This reaction serves as the major source of one-carbon groups required for the biosynthesis of purines, thymidylate, methionine, and other important biomolecules. Also exhibits THF-independent aldolase activity toward beta-hydroxyamino acids, producing glycine and aldehydes, via a retro-aldol mechanism. In Legionella pneumophila (strain Lens), this protein is Serine hydroxymethyltransferase.